The sequence spans 503 residues: ATP synthase subunit alpha (503 aa).

Residue 170 to 177 (GDRKTGKT) coordinates ATP.

Belongs to the ATPase alpha/beta chains family. As to quaternary structure, F-type ATPases have 2 components, CF(1) - the catalytic core - and CF(0) - the membrane proton channel. CF(1) has five subunits: alpha(3), beta(3), gamma(1), delta(1), epsilon(1). CF(0) has four main subunits: a, b, b' and c.

The protein resides in the cellular thylakoid membrane. It catalyses the reaction ATP + H2O + 4 H(+)(in) = ADP + phosphate + 5 H(+)(out). In terms of biological role, produces ATP from ADP in the presence of a proton gradient across the membrane. The alpha chain is a regulatory subunit. In Rippkaea orientalis (strain PCC 8801 / RF-1) (Cyanothece sp. (strain PCC 8801)), this protein is ATP synthase subunit alpha.